Reading from the N-terminus, the 349-residue chain is Phosphate acyltransferase (349 aa).

This sequence belongs to the PlsX family. As to quaternary structure, homodimer. Probably interacts with PlsY.

The protein localises to the cytoplasm. The enzyme catalyses a fatty acyl-[ACP] + phosphate = an acyl phosphate + holo-[ACP]. Its pathway is lipid metabolism; phospholipid metabolism. Its function is as follows. Catalyzes the reversible formation of acyl-phosphate (acyl-PO(4)) from acyl-[acyl-carrier-protein] (acyl-ACP). This enzyme utilizes acyl-ACP as fatty acyl donor, but not acyl-CoA. In Colwellia psychrerythraea (strain 34H / ATCC BAA-681) (Vibrio psychroerythus), this protein is Phosphate acyltransferase.